We begin with the raw amino-acid sequence, 1410 residues long: SNF2 domain-containing protein CLASSY 3 (1410 aa).

The segment covering M1–S12 has biased composition (basic residues). 6 disordered regions span residues M1 to N74, D87 to N108, G209 to R330, R344 to V376, N428 to K593, and E632 to H654. The short motif at R22–A29 is the Nuclear localization signal 1 element. The segment covering G95 to N108 has biased composition (polar residues). A compositionally biased stretch (acidic residues) spans S245 to D266. Positions E248–L278 form a coiled coil. Residues E276–S301 show a composition bias toward low complexity. Over residues S306–K323 the composition is skewed to basic and acidic residues. The short motif at I328 to E335 is the Nuclear localization signal 2 element. Basic and acidic residues predominate over residues K351 to V376. The stretch at D356–V377 forms a coiled coil. A compositionally biased stretch (polar residues) spans N428–A446. Basic and acidic residues-rich tracts occupy residues P450–T463 and E488–Q504. Over residues S576–D587 the composition is skewed to low complexity. A Helicase ATP-binding domain is found at F850–K1060. An ATP-binding site is contributed by H863–T870. Residues D1011–H1014 carry the DEAH box motif. The short motif at Q1132–I1139 is the Nuclear localization signal 3 element. One can recognise a Helicase C-terminal domain in the interval E1206–H1359.

It belongs to the SNF2/RAD54 helicase family. Interacts with NRPD1.

The protein localises to the nucleus. Probable chromatin remodeling factor. The protein is SNF2 domain-containing protein CLASSY 3 (CLSY3) of Arabidopsis thaliana (Mouse-ear cress).